Reading from the N-terminus, the 177-residue chain is Photosystem I assembly protein Ycf4 (177 aa).

2 helical membrane-spanning segments follow: residues 20–40 and 60–80; these read VALL…SSYF and LVMG…WAVI.

Belongs to the Ycf4 family.

Its subcellular location is the cellular thylakoid membrane. Seems to be required for the assembly of the photosystem I complex. The sequence is that of Photosystem I assembly protein Ycf4 from Synechococcus sp. (strain RCC307).